The sequence spans 377 residues: MISPRMTTNLLPARTISLVSNGGAATASPSSPSVAARPRRPSSGTGRGKVSAITLDDYLPMRSTEVKNRTSTDDITSLRLITAVKTPYLPDGRFDLEAYDSLINMQIEGGAEGVIVGGTTGEGHLMSWDEHIMLIGHTVNCFGSRIKVIGNTGSNSTREAVHATEQGFAVGMHAALHINPYYGKTSTEGMISHFESVLPMGPTIIYNVPSRSAQDIPPEVIVAISGYINMAGVKECIGHERIKHYADKGITIWSGNDDECHDSRWKYGATGVISVTSNLVPGLMHSLMYKGENAVLKEKLLPLMKWLFCQPNPIALNTALAQLGVARPVFRLPYVPLPLEKRAEFVRIVEAIGRENFVGQKETRVLDDDDFVLISRY.

The transit peptide at 1–51 (MISPRMTTNLLPARTISLVSNGGAATASPSSPSVAARPRRPSSGTGRGKVS) directs the protein to the chloroplast. The tract at residues 21–50 (NGGAATASPSSPSVAARPRRPSSGTGRGKV) is disordered. Residues 24 to 44 (AATASPSSPSVAARPRRPSSG) show a composition bias toward low complexity. Thr120 is a binding site for pyruvate. The Proton donor/acceptor role is filled by Tyr206. Catalysis depends on Lys234, which acts as the Schiff-base intermediate with substrate. Residue Ile273 participates in pyruvate binding.

This sequence belongs to the DapA family.

Its subcellular location is the plastid. The protein resides in the chloroplast. The catalysed reaction is L-aspartate 4-semialdehyde + pyruvate = (2S,4S)-4-hydroxy-2,3,4,5-tetrahydrodipicolinate + H2O + H(+). It functions in the pathway amino-acid biosynthesis; L-lysine biosynthesis via DAP pathway; (S)-tetrahydrodipicolinate from L-aspartate: step 3/4. Catalyzes the condensation of (S)-aspartate-beta-semialdehyde [(S)-ASA] and pyruvate to 4-hydroxy-tetrahydrodipicolinate (HTPA). The chain is 4-hydroxy-tetrahydrodipicolinate synthase, chloroplastic (DAPA) from Coix lacryma-jobi (Job's tears).